A 561-amino-acid polypeptide reads, in one-letter code: Glucose-6-phosphate isomerase (561 aa).

D-glucose 6-phosphate is bound by residues 171–172 (GS), 222–227 (SKTFTT), Gln366, Glu370, His401, and Lys525. The active-site Proton donor is Glu370. Catalysis depends on residues His401 and Lys525.

This sequence belongs to the GPI family. As to quaternary structure, homodimer.

The protein localises to the cytoplasm. It localises to the cytosol. It catalyses the reaction alpha-D-glucose 6-phosphate = beta-D-fructose 6-phosphate. It functions in the pathway carbohydrate degradation; glycolysis; D-glyceraldehyde 3-phosphate and glycerone phosphate from D-glucose: step 2/4. Functionally, in the cytoplasm, catalyzes the conversion of glucose-6-phosphate to fructose-6-phosphate, the second step in glycolysis, and the reverse reaction during gluconeogenesis. In Neurospora crassa (strain ATCC 24698 / 74-OR23-1A / CBS 708.71 / DSM 1257 / FGSC 987), this protein is Glucose-6-phosphate isomerase (pgi-1).